The sequence spans 335 residues: Fructose-1,6-bisphosphatase class 1 (335 aa).

Residues E92, D114, L116, and D117 each coordinate Mg(2+). Residues 117–120 (DGSS), N209, and K275 contribute to the substrate site. E281 contacts Mg(2+).

It belongs to the FBPase class 1 family. In terms of assembly, homotetramer. Requires Mg(2+) as cofactor.

It is found in the cytoplasm. The enzyme catalyses beta-D-fructose 1,6-bisphosphate + H2O = beta-D-fructose 6-phosphate + phosphate. Its pathway is carbohydrate biosynthesis; gluconeogenesis. In Polaromonas sp. (strain JS666 / ATCC BAA-500), this protein is Fructose-1,6-bisphosphatase class 1.